We begin with the raw amino-acid sequence, 325 residues long: MLLAPGDVIKRSSEELKQRQIQINLVDWTESEGGKENKTEPKEESKAEGSKDGEGTQSESGQKEEGGKETKDADVDRRIHTAVGSGSSTKGPGERANENADRGDGKVGGGGGDADAGVGATGTNGRRWVVLTEEIARAIESKYGTKIDVYRDEVPAQIIEVERSLQKELGISREGVAEQTERSRDLRRKEKNGTHAKAVERGGRKQRKESHGDAQREGVEEEKTSEEPARIGITIEGVMSQNKLLSMIGGVERKMAPIGARESAVMLVSNSIKDVVRATAYFTAPTGDPHWKEVAREASKKKNILAYTSTGGDAKTEFLHLIDHL.

Disordered regions lie at residues 1–127 (MLLA…NGRR) and 174–230 (EGVA…EPAR). Basic and acidic residues-rich tracts occupy residues 8–18 (VIKRSSEELKQ), 32–54 (EGGK…KDGE), 61–79 (GQKE…DRRI), and 92–105 (PGER…RGDG). K106 contributes to the ATP binding site. A compositionally biased stretch (gly residues) spans 106–122 (KVGGGGGDADAGVGATG). Residues 175–229 (GVAEQTERSRDLRRKEKNGTHAKAVERGGRKQRKESHGDAQREGVEEEKTSEEPA) show a composition bias toward basic and acidic residues.

Belongs to the orbivirus VP6 family. As to quaternary structure, homohexamer.

It is found in the virion. The catalysed reaction is ATP + H2O = ADP + phosphate + H(+). In terms of biological role, ATP dependent RNA helicase essential for RNA packaging and viral transcription. Possesses ss- and dsRNA-binding capacity. This is Helicase VP6-A (Segment-9) from Bluetongue virus 13 (isolate USA) (BTV 13).